A 133-amino-acid polypeptide reads, in one-letter code: MAVPLLTKKVVKKRSAKFIRPQSDRRITVKESWRRPKGIDSRVRRKFKGVTLMPNVGYGSDKKTRHYLPNGFKKFVVHNTSELELLMMHNRTYCAEIAHNVSTKKRKAIVERASQLDVVVTNRLARLRSQEDE.

This sequence belongs to the eukaryotic ribosomal protein eL32 family.

The sequence is that of Large ribosomal subunit protein eL32z (RPL32A) from Arabidopsis thaliana (Mouse-ear cress).